A 125-amino-acid chain; its full sequence is MAVYAKDLDNNKELNQKLINDQLKIIDTLLLAEKKNFLVYELPAHFDFSSGDPLGSQRDIYYAIIKSLEERGFTVKICMKGDRALLFITWKKIQSIEINKKEEYLRMHFIQDEEKAFYCKFLESR.

The protein belongs to the asfivirus B125R family.

This is an uncharacterized protein from African swine fever virus (isolate Pig/Kenya/KEN-50/1950) (ASFV).